The sequence spans 477 residues: RNA pseudouridine synthase 6, chloroplastic (477 aa).

Residues 1 to 52 constitute a chloroplast transit peptide; it reads MPKAAASLASLLPQLWHRPVQPPPFLHRALSSSSPLLRRHRAALHSPAAPLS. The region spanning 98–205 is the S4 RNA-binding domain; sequence EVAVDFISRS…FPRCYEIDWK (108 aa). Aspartate 258 is an active-site residue.

This sequence belongs to the pseudouridine synthase RluA family.

The protein resides in the plastid. The protein localises to the chloroplast. It carries out the reaction a uridine in RNA = a pseudouridine in RNA. In Oryza sativa subsp. japonica (Rice), this protein is RNA pseudouridine synthase 6, chloroplastic.